A 380-amino-acid chain; its full sequence is Variant-surface-glycoprotein phospholipase C (380 aa).

The PI-PLC X-box domain occupies 31 to 205; the sequence is ITQVCFVGSH…SRRRIFLVVG (175 aa).

In terms of assembly, monomer.

The protein localises to the membrane. The catalysed reaction is a 6-(alpha-D-glucosaminyl)-1-(1,2-diacyl-sn-glycero-3-phospho)-1D-myo-inositol = 6-(alpha-D-glucosaminyl)-1D-myo-inositol 1,2-cyclic phosphate + a 1,2-diacyl-sn-glycerol. Its function is as follows. By hydrolysis of the attached glycolipid, releases soluble variant surface glycoprotein containing phosphoinositol from the cell wall of T.brucei after cell lysis. It also cleaves similar membrane anchors on some mammalian proteins. VSG lipase may play a role in processes such as parasite differentiation or antigenic variation. This chain is Variant-surface-glycoprotein phospholipase C, found in Trypanosoma cruzi.